The primary structure comprises 447 residues: Cysteine--tRNA ligase (447 aa).

Residue Cys28 participates in Zn(2+) binding. The 'HIGH' region signature appears at Pro30–Asn40. Residues Cys211, His236, and Glu240 each contribute to the Zn(2+) site. The short motif at Lys268 to Ser272 is the 'KMSKS' region element. Residue Lys271 participates in ATP binding.

It belongs to the class-I aminoacyl-tRNA synthetase family. As to quaternary structure, monomer. Requires Zn(2+) as cofactor.

It is found in the cytoplasm. The enzyme catalyses tRNA(Cys) + L-cysteine + ATP = L-cysteinyl-tRNA(Cys) + AMP + diphosphate. The polypeptide is Cysteine--tRNA ligase (Streptococcus agalactiae serotype III (strain NEM316)).